A 356-amino-acid polypeptide reads, in one-letter code: uncharacterized protein (356 aa).

This is an uncharacterized protein from Acanthamoeba polyphaga (Amoeba).